Consider the following 212-residue polypeptide: Phosphatidylserine decarboxylase proenzyme (212 aa).

The active-site Schiff-base intermediate with substrate; via pyruvic acid is serine 182. The residue at position 182 (serine 182) is a Pyruvic acid (Ser); by autocatalysis.

This sequence belongs to the phosphatidylserine decarboxylase family. PSD-A subfamily. As to quaternary structure, heterodimer of a large membrane-associated beta subunit and a small pyruvoyl-containing alpha subunit. Requires pyruvate as cofactor. Post-translationally, is synthesized initially as an inactive proenzyme. Formation of the active enzyme involves a self-maturation process in which the active site pyruvoyl group is generated from an internal serine residue via an autocatalytic post-translational modification. Two non-identical subunits are generated from the proenzyme in this reaction, and the pyruvate is formed at the N-terminus of the alpha chain, which is derived from the carboxyl end of the proenzyme. The post-translation cleavage follows an unusual pathway, termed non-hydrolytic serinolysis, in which the side chain hydroxyl group of the serine supplies its oxygen atom to form the C-terminus of the beta chain, while the remainder of the serine residue undergoes an oxidative deamination to produce ammonia and the pyruvoyl prosthetic group on the alpha chain.

It is found in the cell membrane. It carries out the reaction a 1,2-diacyl-sn-glycero-3-phospho-L-serine + H(+) = a 1,2-diacyl-sn-glycero-3-phosphoethanolamine + CO2. It participates in phospholipid metabolism; phosphatidylethanolamine biosynthesis; phosphatidylethanolamine from CDP-diacylglycerol: step 2/2. Functionally, catalyzes the formation of phosphatidylethanolamine (PtdEtn) from phosphatidylserine (PtdSer). The chain is Phosphatidylserine decarboxylase proenzyme from Paraburkholderia phymatum (strain DSM 17167 / CIP 108236 / LMG 21445 / STM815) (Burkholderia phymatum).